The chain runs to 103 residues: Integration host factor subunit alpha (103 aa).

A disordered region spans residues 51 to 73 (FGNFQLRDKPQRPGRNPKTGEEI).

Belongs to the bacterial histone-like protein family. Heterodimer of an alpha and a beta chain.

Functionally, this protein is one of the two subunits of integration host factor, a specific DNA-binding protein that functions in genetic recombination as well as in transcriptional and translational control. This is Integration host factor subunit alpha from Azoarcus sp. (strain BH72).